The primary structure comprises 783 residues: BMP/retinoic acid-inducible neural-specific protein 2 (783 aa).

The signal sequence occupies residues 1–33 (MRWQCGTRFRGLRPAVAPWTALLALGLPGWVLA). The region spanning 85–281 (RYRIYREFAR…FVAAALSYIT (197 aa)) is the MACPF domain. N-linked (GlcNAc...) asparagine glycans are attached at residues Asn185, Asn354, Asn473, Asn579, Asn626, and Asn658.

The protein belongs to the BRINP family.

It is found in the secreted. Its function is as follows. Inhibits neuronal cell proliferation by negative regulation of the cell cycle transition. This chain is BMP/retinoic acid-inducible neural-specific protein 2 (BRINP2), found in Homo sapiens (Human).